A 263-amino-acid chain; its full sequence is Ribosomal RNA large subunit methyltransferase E (263 aa).

Residues Gly50, Trp52, Asp68, Asn84, and Asp109 each coordinate S-adenosyl-L-methionine. Lys149 (proton acceptor) is an active-site residue. Positions 196-254 (PLRKGDKFVVDIEKLGSSGDGAVLIEGFVVFVKEVEVGEKVRIKITDVKPNFAFADVAE) constitute a TRAM domain.

Belongs to the class I-like SAM-binding methyltransferase superfamily. RNA methyltransferase RlmE family.

The protein localises to the cytoplasm. The catalysed reaction is uridine(2552) in 23S rRNA + S-adenosyl-L-methionine = 2'-O-methyluridine(2552) in 23S rRNA + S-adenosyl-L-homocysteine + H(+). Functionally, specifically methylates the uridine in position 2552 of 23S rRNA at the 2'-O position of the ribose in the fully assembled 50S ribosomal subunit. This is Ribosomal RNA large subunit methyltransferase E from Methanosarcina barkeri (strain Fusaro / DSM 804).